A 212-amino-acid polypeptide reads, in one-letter code: Adenylate kinase (212 aa).

14–19 is a binding site for ATP; it reads GSGKGT. The NMP stretch occupies residues 34–63; sequence STGDLFRKKISEDSQFAAQIQNYLSSGSYV. AMP-binding positions include Thr-35, Arg-40, 61 to 63, 89 to 92, and Gln-96; these read SYV and GYPR. The interval 126–163 is LID; that stretch reads QRLFCQKCQKSYNLLLAKPKNELKCDLDSTDLITRNDD. Residue Arg-127 participates in ATP binding. Residues Cys-130 and Cys-133 each contribute to the Zn(2+) site. Residue 136–137 participates in ATP binding; sequence SY. The Zn(2+) site is built by Cys-150 and Asp-153. Residues Arg-160 and Arg-171 each coordinate AMP. Gln-199 contributes to the ATP binding site.

It belongs to the adenylate kinase family. In terms of assembly, monomer.

It localises to the cytoplasm. It catalyses the reaction AMP + ATP = 2 ADP. It participates in purine metabolism; AMP biosynthesis via salvage pathway; AMP from ADP: step 1/1. Functionally, catalyzes the reversible transfer of the terminal phosphate group between ATP and AMP. Plays an important role in cellular energy homeostasis and in adenine nucleotide metabolism. The sequence is that of Adenylate kinase from Mesomycoplasma hyopneumoniae (strain J / ATCC 25934 / NCTC 10110) (Mycoplasma hyopneumoniae).